The sequence spans 328 residues: Malate dehydrogenase (328 aa).

11–17 contributes to the NAD(+) binding site; sequence GAAGQIG. Residues arginine 94 and arginine 100 each coordinate substrate. Residues asparagine 107, glutamine 114, and 131–133 each bind NAD(+); that span reads VGN. Positions 133 and 164 each coordinate substrate. Histidine 189 acts as the Proton acceptor in catalysis.

It belongs to the LDH/MDH superfamily. MDH type 2 family.

It carries out the reaction (S)-malate + NAD(+) = oxaloacetate + NADH + H(+). In terms of biological role, catalyzes the reversible oxidation of malate to oxaloacetate. The polypeptide is Malate dehydrogenase (Acinetobacter baylyi (strain ATCC 33305 / BD413 / ADP1)).